Reading from the N-terminus, the 124-residue chain is Large ribosomal subunit protein bL12 (124 aa).

It belongs to the bacterial ribosomal protein bL12 family. Homodimer. Part of the ribosomal stalk of the 50S ribosomal subunit. Forms a multimeric L10(L12)X complex, where L10 forms an elongated spine to which 2 to 4 L12 dimers bind in a sequential fashion. Binds GTP-bound translation factors.

Functionally, forms part of the ribosomal stalk which helps the ribosome interact with GTP-bound translation factors. Is thus essential for accurate translation. In Leptothrix cholodnii (strain ATCC 51168 / LMG 8142 / SP-6) (Leptothrix discophora (strain SP-6)), this protein is Large ribosomal subunit protein bL12.